Reading from the N-terminus, the 418-residue chain is Serine hydroxymethyltransferase (418 aa).

(6S)-5,6,7,8-tetrahydrofolate-binding positions include Leu121 and 125-127; that span reads GHL. The residue at position 230 (Lys230) is an N6-(pyridoxal phosphate)lysine. (6S)-5,6,7,8-tetrahydrofolate contacts are provided by residues Glu246 and 355-357; that span reads SPF.

The protein belongs to the SHMT family. As to quaternary structure, homodimer. Pyridoxal 5'-phosphate serves as cofactor.

It localises to the cytoplasm. The catalysed reaction is (6R)-5,10-methylene-5,6,7,8-tetrahydrofolate + glycine + H2O = (6S)-5,6,7,8-tetrahydrofolate + L-serine. Its pathway is one-carbon metabolism; tetrahydrofolate interconversion. It participates in amino-acid biosynthesis; glycine biosynthesis; glycine from L-serine: step 1/1. Its function is as follows. Catalyzes the reversible interconversion of serine and glycine with tetrahydrofolate (THF) serving as the one-carbon carrier. This reaction serves as the major source of one-carbon groups required for the biosynthesis of purines, thymidylate, methionine, and other important biomolecules. Also exhibits THF-independent aldolase activity toward beta-hydroxyamino acids, producing glycine and aldehydes, via a retro-aldol mechanism. The sequence is that of Serine hydroxymethyltransferase from Streptococcus pneumoniae (strain Taiwan19F-14).